A 179-amino-acid chain; its full sequence is Bifunctional protein PyrR (179 aa).

Substrate contacts are provided by residues 39–40 (RR), 101–109 (DDVLFTGRT), Arg134, and Val158. The PRPP-binding signature appears at 97 to 109 (VILIDDVLFTGRT).

This sequence belongs to the purine/pyrimidine phosphoribosyltransferase family. PyrR subfamily.

The enzyme catalyses UMP + diphosphate = 5-phospho-alpha-D-ribose 1-diphosphate + uracil. In terms of biological role, regulates the transcription of the pyrimidine nucleotide (pyr) operon in response to exogenous pyrimidines. Also displays a weak uracil phosphoribosyltransferase activity which is not physiologically significant. The polypeptide is Bifunctional protein PyrR (Haemophilus ducreyi (strain 35000HP / ATCC 700724)).